The primary structure comprises 864 residues: MTSFEIRQMWLKFFASKNHHIAKSSSLIPRNEANLLWVNAGITPLKKYFDGTQTPPFRRITNVQKCIRTNDIKNVGKTSRHHTFFEMLGNFSIGNYFKKEAIHYAFELLTSPKWFAFPLEKLYITYFFQDQDTYQYWLDLGVEKNHLIPLKSNFWQIGPGPSGPCTEIFFDRGKTFDPRNKELIIQDLENDRFIEIWNIVFSQYNCDPKLPIEKYQELPSKNIDTGAGLERLACILQNTKTNFETDLFFPLIKALEKMTQIKYTGQESFKIIADHLKTLVFAINDGAVLTNEKRGYVLKKLLRRAANEGKKLGLDKPFLHQLVPPTAAMMKDFYKELCTNQEIIAKVLLQQENIFEQTLKTAEKTFLQHLTQNTLSGQNFFKLYDTYGIPEDLILDYAKKKNITTDYQKFQELLHDHQNLSKQNQTSQIHMNKQEESFLQFLTPSEFIGYTNFTCKTKVIKVFDKGIVLEKTPFYANMGGQIEDEGWIDNTKVTKITKLPNGQILHEVQGNFCEGQEVYACIEKTKRNQISYHHTATHLLEAVLQKQLGSHLKKQGSSVGFSSLRYDFNHFEKITPQTLLQIEKEVNQLIQKSVPVKIEQLSIPDAQKKYATLLEQNQKAKYKDKVRIVSIDTFSVDLCGGTHATNTKDLEHFTILSCESISSGIYRIEAVCNNNCQESLNAKLVPYQNDLHQLTQKAKSLQTQNLIFDVKNFPPITQSYQDILNYQKHIKAQQQALVLFEKKVLEYHQKNMVQAESNFLPPQITKKMMLTIEEEKPLEVLKFFMNHIFDKYHLEVLFLSYVQPEKIVFLCKSKTLHAGNLIKEAVSLVCGSGGGNASLAQGGTKKTKNLEQVLNFVKTKLEIN.

The Zn(2+) site is built by His-534, His-538, Cys-639, and His-643.

Belongs to the class-II aminoacyl-tRNA synthetase family. Zn(2+) is required as a cofactor.

It localises to the cytoplasm. It catalyses the reaction tRNA(Ala) + L-alanine + ATP = L-alanyl-tRNA(Ala) + AMP + diphosphate. Its function is as follows. Catalyzes the attachment of alanine to tRNA(Ala) in a two-step reaction: alanine is first activated by ATP to form Ala-AMP and then transferred to the acceptor end of tRNA(Ala). Also edits incorrectly charged Ser-tRNA(Ala) and Gly-tRNA(Ala) via its editing domain. In Onion yellows phytoplasma (strain OY-M), this protein is Alanine--tRNA ligase.